The primary structure comprises 436 residues: 3-phosphoshikimate 1-carboxyvinyltransferase (436 aa).

3-phosphoshikimate is bound by residues K22, S23, and R27. K22 contacts phosphoenolpyruvate. Phosphoenolpyruvate contacts are provided by G95 and R123. 6 residues coordinate 3-phosphoshikimate: S170, S171, Q172, S201, D322, and K349. Phosphoenolpyruvate is bound at residue Q172. Catalysis depends on D322, which acts as the Proton acceptor. 3 residues coordinate phosphoenolpyruvate: R353, R397, and K422.

Belongs to the EPSP synthase family. Monomer.

The protein localises to the cytoplasm. The enzyme catalyses 3-phosphoshikimate + phosphoenolpyruvate = 5-O-(1-carboxyvinyl)-3-phosphoshikimate + phosphate. It functions in the pathway metabolic intermediate biosynthesis; chorismate biosynthesis; chorismate from D-erythrose 4-phosphate and phosphoenolpyruvate: step 6/7. Its function is as follows. Catalyzes the transfer of the enolpyruvyl moiety of phosphoenolpyruvate (PEP) to the 5-hydroxyl of shikimate-3-phosphate (S3P) to produce enolpyruvyl shikimate-3-phosphate and inorganic phosphate. The chain is 3-phosphoshikimate 1-carboxyvinyltransferase from Ralstonia nicotianae (strain ATCC BAA-1114 / GMI1000) (Ralstonia solanacearum).